The sequence spans 149 residues: Calmodulin (149 aa).

EF-hand domains lie at 8 to 43, 44 to 79, 81 to 116, and 117 to 149; these read QQIAEFKEAFSLFDKDSDGKITTKELGTVMRSLGQN, PSESELTDMINEVDVNSDGSIDFPEFLTMMARKMKD, DSEAEIAEAFKVFDRNGDGKISAAELRHLLTSIGEK, and LSDADVDQMIKEADTNNDGEIDIQEFTSLLAAK. Positions 21, 23, 25, 27, 32, 57, 59, 61, 63, 68, 94, 96, 98, 100, 105, 130, 132, 134, 136, and 141 each coordinate Ca(2+).

It belongs to the calmodulin family.

Functionally, calmodulin mediates the control of a large number of enzymes, ion channels and other proteins by Ca(2+). Among the enzymes to be stimulated by the calmodulin-Ca(2+) complex are a number of protein kinases and phosphatases. The polypeptide is Calmodulin (CMD1) (Candida albicans (Yeast)).